Reading from the N-terminus, the 425-residue chain is Enolase (425 aa).

A (2R)-2-phosphoglycerate-binding site is contributed by Q162. E204 acts as the Proton donor in catalysis. Residues D241, E282, and D309 each coordinate Mg(2+). 4 residues coordinate (2R)-2-phosphoglycerate: K334, R363, S364, and K385. K334 functions as the Proton acceptor in the catalytic mechanism.

Belongs to the enolase family. Requires Mg(2+) as cofactor.

It localises to the cytoplasm. The protein localises to the secreted. It is found in the cell surface. It catalyses the reaction (2R)-2-phosphoglycerate = phosphoenolpyruvate + H2O. It participates in carbohydrate degradation; glycolysis; pyruvate from D-glyceraldehyde 3-phosphate: step 4/5. In terms of biological role, catalyzes the reversible conversion of 2-phosphoglycerate (2-PG) into phosphoenolpyruvate (PEP). It is essential for the degradation of carbohydrates via glycolysis. The polypeptide is Enolase (Corynebacterium urealyticum (strain ATCC 43042 / DSM 7109)).